A 219-amino-acid chain; its full sequence is Adenylate kinase (219 aa).

Position 10-15 (10-15 (GAGKGT)) interacts with ATP. The segment at 30–59 (STGDMLRAAVKAETPVGLEAKKVMDAGQLV) is NMP. Residues threonine 31, arginine 36, 57–59 (QLV), 85–88 (GFPR), and glutamine 92 contribute to the AMP site. Residues 122–159 (GRRVHLSSGRTYHVLFNPPKQEGLDDETGEPLVQRADD) are LID. Residues arginine 123 and 132–133 (TY) contribute to the ATP site. The AMP site is built by arginine 156 and arginine 167. ATP is bound at residue glycine 203.

Belongs to the adenylate kinase family. Monomer.

It is found in the cytoplasm. It carries out the reaction AMP + ATP = 2 ADP. It participates in purine metabolism; AMP biosynthesis via salvage pathway; AMP from ADP: step 1/1. Catalyzes the reversible transfer of the terminal phosphate group between ATP and AMP. Plays an important role in cellular energy homeostasis and in adenine nucleotide metabolism. This chain is Adenylate kinase, found in Chlorobium limicola (strain DSM 245 / NBRC 103803 / 6330).